A 125-amino-acid polypeptide reads, in one-letter code: Large ribosomal subunit protein bL12 (125 aa).

This sequence belongs to the bacterial ribosomal protein bL12 family. In terms of assembly, homodimer. Part of the ribosomal stalk of the 50S ribosomal subunit. Forms a multimeric L10(L12)X complex, where L10 forms an elongated spine to which 2 to 4 L12 dimers bind in a sequential fashion. Binds GTP-bound translation factors.

Functionally, forms part of the ribosomal stalk which helps the ribosome interact with GTP-bound translation factors. Is thus essential for accurate translation. In Campylobacter concisus (strain 13826), this protein is Large ribosomal subunit protein bL12.